A 1576-amino-acid polypeptide reads, in one-letter code: DExH-box ATP-dependent RNA helicase DExH2 (1576 aa).

Positions 15–78 (EATGAWATKV…ERRLSLFKGD (64 aa)) constitute an R3H domain. The Helicase ATP-binding domain maps to 227-396 (ISAVESNQVV…FGGCPVVRVP (170 aa)). 240-247 (GETGCGKT) is a binding site for ATP. A DEIH box motif is present at residues 343 to 346 (DEIH). Residues 561–735 (LIVKLMKKIC…ELCLQVKMLD (175 aa)) enclose the Helicase C-terminal domain. 3 disordered regions span residues 1137–1165 (ATSPRDDIPSTNPNELREHDPNTTPMGSK), 1177–1223 (MEES…SLNN), and 1260–1576 (DMGN…PSDQ). Residues 1281–1301 (PNSANSMDLGNMEENTPSDLA) show a composition bias toward polar residues. Residues 1305 to 1319 (KKKEPKSVSKLDLGS) show a composition bias toward basic and acidic residues. Residues 1349–1360 (KQPEKKRSRSKK) carry the PH1 motif. Basic residues predominate over residues 1352-1363 (EKKRSRSKKRKS). Residues 1381–1412 (ANENEQTEPKSANNLDLGNMKENTPSDLANEN) are compositionally biased toward polar residues. The short motif at 1454–1465 (KQPKKKRSRSKK) is the PH2 element. The span at 1455-1467 (QPKKKRSRSKKCK) shows a compositional bias: basic residues. Basic and acidic residues predominate over residues 1490–1508 (EQKDPESVNRLDPGKEKES). A compositionally biased stretch (polar residues) spans 1509 to 1524 (IPSNLVSGNEQPDSNT). Basic residues predominate over residues 1528-1537 (KKPKKKKRKL). A Nuclear localization signal motif is present at residues 1530–1537 (PKKKKRKL). Positions 1540 to 1562 (NFDSVNNMEEKMPSTNVLSQGNK) are enriched in polar residues.

This sequence belongs to the DExH box helicase family. In terms of assembly, homodimer.

It localises to the nucleus. It catalyses the reaction ATP + H2O = ADP + phosphate + H(+). May function as an ATP-dependent RNA/DNA helicase. Binds DNA in vitro in a non-specific manner. The sequence is that of DExH-box ATP-dependent RNA helicase DExH2 from Arabidopsis thaliana (Mouse-ear cress).